The chain runs to 99 residues: Protein Tat (99 aa).

The segment at methionine 1–asparagine 24 is interaction with human CREBBP. Residues methionine 1 to glycine 48 form a transactivation region. Zn(2+) contacts are provided by cysteine 22, cysteine 25, and cysteine 27. The cysteine-rich stretch occupies residues cysteine 22–cysteine 37. Residue lysine 28 is modified to N6-acetyllysine; by host PCAF. Zn(2+) contacts are provided by cysteine 30, histidine 33, cysteine 34, and cysteine 37. Residues phenylalanine 38 to glycine 48 form a core region. The interval tyrosine 47–proline 99 is disordered. Residues glycine 48–threonine 58 show a composition bias toward basic residues. The Nuclear localization signal, RNA-binding (TAR), and protein transduction signature appears at arginine 49–arginine 57. The segment at arginine 49–glutamate 86 is interaction with the host capping enzyme RNGTT. An N6-acetyllysine; by host EP300 and GCN5L2 mark is found at lysine 50 and lysine 51. 2 positions are modified to asymmetric dimethylarginine; by host PRMT6: arginine 52 and arginine 53. A Glycyl lysine isopeptide (Lys-Gly) (interchain with G-Cter in ubiquitin) cross-link involves residue lysine 71. Residues arginine 78 to aspartate 80 carry the Cell attachment site motif.

Belongs to the lentiviruses Tat family. As to quaternary structure, interacts with host CCNT1. Associates with the P-TEFb complex composed at least of Tat, P-TEFb (CDK9 and CCNT1), TAR RNA, RNA Pol II. Recruits the HATs CREBBP, TAF1/TFIID, EP300, PCAF and GCN5L2. Interacts with host KAT5/Tip60; this interaction targets the latter to degradation. Interacts with the host deacetylase SIRT1. Interacts with host capping enzyme RNGTT; this interaction stimulates RNGTT. Binds to host KDR, and to the host integrins ITGAV/ITGB3 and ITGA5/ITGB1. Interacts with host KPNB1/importin beta-1 without previous binding to KPNA1/importin alpha-1. Interacts with EIF2AK2. Interacts with host nucleosome assembly protein NAP1L1; this interaction may be required for the transport of Tat within the nucleus, since the two proteins interact at the nuclear rim. Interacts with host C1QBP/SF2P32; this interaction involves lysine-acetylated Tat. Interacts with the host chemokine receptors CCR2, CCR3 and CXCR4. Interacts with host DPP4/CD26; this interaction may trigger an anti-proliferative effect. Interacts with host LDLR. Interacts with the host extracellular matrix metalloproteinase MMP1. Interacts with host PRMT6; this interaction mediates Tat's methylation. Interacts with, and is ubiquitinated by MDM2/Hdm2. Interacts with host PSMC3 and HTATIP2. Interacts with STAB1; this interaction may overcome SATB1-mediated repression of IL2 and IL2RA (interleukin) in T cells by binding to the same domain than HDAC1. Interacts (when acetylated) with human CDK13, thereby increasing HIV-1 mRNA splicing and promoting the production of the doubly spliced HIV-1 protein Nef. Interacts with host TBP; this interaction modulates the activity of transcriptional pre-initiation complex. Interacts with host RELA. Interacts with host PLSCR1; this interaction negatively regulates Tat transactivation activity by altering its subcellular distribution. Asymmetrical arginine methylation by host PRMT6 seems to diminish the transactivation capacity of Tat and affects the interaction with host CCNT1. Post-translationally, acetylation by EP300, CREBBP, GCN5L2/GCN5 and PCAF regulates the transactivation activity of Tat. EP300-mediated acetylation of Lys-50 promotes dissociation of Tat from the TAR RNA through the competitive binding to PCAF's bromodomain. In addition, the non-acetylated Tat's N-terminus can also interact with PCAF. PCAF-mediated acetylation of Lys-28 enhances Tat's binding to CCNT1. Lys-50 is deacetylated by SIRT1. In terms of processing, polyubiquitination by host MDM2 does not target Tat to degradation, but activates its transactivation function and fosters interaction with CCNT1 and TAR RNA. Phosphorylated by EIF2AK2 on serine and threonine residues adjacent to the basic region important for TAR RNA binding and function. Phosphorylation of Tat by EIF2AK2 is dependent on the prior activation of EIF2AK2 by dsRNA.

The protein localises to the host nucleus. The protein resides in the host nucleolus. It localises to the host cytoplasm. It is found in the secreted. Transcriptional activator that increases RNA Pol II processivity, thereby increasing the level of full-length viral transcripts. Recognizes a hairpin structure at the 5'-LTR of the nascent viral mRNAs referred to as the transactivation responsive RNA element (TAR) and recruits the cyclin T1-CDK9 complex (P-TEFb complex) that will in turn hyperphosphorylate the RNA polymerase II to allow efficient elongation. The CDK9 component of P-TEFb and other Tat-activated kinases hyperphosphorylate the C-terminus of RNA Pol II that becomes stabilized and much more processive. Other factors such as HTATSF1/Tat-SF1, SUPT5H/SPT5, and HTATIP2 are also important for Tat's function. Besides its effect on RNA Pol II processivity, Tat induces chromatin remodeling of proviral genes by recruiting the histone acetyltransferases (HATs) CREBBP, EP300 and PCAF to the chromatin. This also contributes to the increase in proviral transcription rate, especially when the provirus integrates in transcriptionally silent region of the host genome. To ensure maximal activation of the LTR, Tat mediates nuclear translocation of NF-kappa-B by interacting with host RELA. Through its interaction with host TBP, Tat may also modulate transcription initiation. Tat can reactivate a latently infected cell by penetrating in it and transactivating its LTR promoter. In the cytoplasm, Tat is thought to act as a translational activator of HIV-1 mRNAs. Functionally, extracellular circulating Tat can be endocytosed by surrounding uninfected cells via the binding to several surface receptors such as CD26, CXCR4, heparan sulfate proteoglycans (HSPG) or LDLR. Neurons are rarely infected, but they internalize Tat via their LDLR. Through its interaction with nuclear HATs, Tat is potentially able to control the acetylation-dependent cellular gene expression. Modulates the expression of many cellular genes involved in cell survival, proliferation or in coding for cytokines or cytokine receptors. Tat plays a role in T-cell and neurons apoptosis. Tat induced neurotoxicity and apoptosis probably contribute to neuroAIDS. Circulating Tat also acts as a chemokine-like and/or growth factor-like molecule that binds to specific receptors on the surface of the cells, affecting many cellular pathways. In the vascular system, Tat binds to ITGAV/ITGB3 and ITGA5/ITGB1 integrins dimers at the surface of endothelial cells and competes with bFGF for heparin-binding sites, leading to an excess of soluble bFGF. The sequence is that of Protein Tat from Homo sapiens (Human).